A 236-amino-acid chain; its full sequence is Adenosine 5'-phosphosulfate reductase 2 (236 aa).

The [4Fe-4S] cluster site is built by cysteine 122, cysteine 123, cysteine 205, and cysteine 208. Residues 216–236 (NDERAGRWAGREKTECGLHQE) form a disordered region. The active-site Nucleophile; cysteine thiosulfonate intermediate is the cysteine 231.

This sequence belongs to the PAPS reductase family. CysH subfamily. [4Fe-4S] cluster is required as a cofactor.

It localises to the cytoplasm. It catalyses the reaction [thioredoxin]-disulfide + sulfite + AMP + 2 H(+) = adenosine 5'-phosphosulfate + [thioredoxin]-dithiol. The protein operates within sulfur metabolism; hydrogen sulfide biosynthesis; sulfite from sulfate. In terms of biological role, catalyzes the formation of sulfite from adenosine 5'-phosphosulfate (APS) using thioredoxin as an electron donor. The polypeptide is Adenosine 5'-phosphosulfate reductase 2 (Bacillus subtilis (strain 168)).